We begin with the raw amino-acid sequence, 157 residues long: Small ribosomal subunit protein uS7 (157 aa).

The protein belongs to the universal ribosomal protein uS7 family. In terms of assembly, part of the 30S ribosomal subunit. Contacts proteins S9 and S11.

Functionally, one of the primary rRNA binding proteins, it binds directly to 16S rRNA where it nucleates assembly of the head domain of the 30S subunit. Is located at the subunit interface close to the decoding center, probably blocks exit of the E-site tRNA. The sequence is that of Small ribosomal subunit protein uS7 from Albidiferax ferrireducens (strain ATCC BAA-621 / DSM 15236 / T118) (Rhodoferax ferrireducens).